The primary structure comprises 379 residues: Sialidase-2 (379 aa).

Positions 20-23 (YRIP) match the FRIP motif motif. Arg-21 and Arg-41 together coordinate substrate. The Proton acceptor role is filled by Asp-46. One copy of the BNR 1 repeat lies at 127–138 (VSSTDHGRTWSP). Residues Tyr-179 and Tyr-181 each coordinate substrate. A BNR 2 repeat occupies 197–208 (FISLDHGHTWKL). Substrate is bound by residues Glu-218, Arg-237, and Arg-303. Arg-303 is an active-site residue. The active-site Nucleophile is Tyr-333. The active site involves Glu-354.

Belongs to the glycosyl hydrolase 33 family. Highly expressed in heart.

Its subcellular location is the cytoplasm. It is found in the cytosol. The enzyme catalyses Hydrolysis of alpha-(2-&gt;3)-, alpha-(2-&gt;6)-, alpha-(2-&gt;8)- glycosidic linkages of terminal sialic acid residues in oligosaccharides, glycoproteins, glycolipids, colominic acid and synthetic substrates.. The catalysed reaction is a ganglioside GD1a + H2O = a ganglioside GM1 + N-acetylneuraminate. It catalyses the reaction a ganglioside GM1 + H2O = a ganglioside GA1 + N-acetylneuraminate. It carries out the reaction a ganglioside GT1b + H2O = a ganglioside GD1b + N-acetylneuraminate. The enzyme catalyses a ganglioside GD1b + H2O = a ganglioside GM1 + N-acetylneuraminate. The catalysed reaction is a ganglioside GD3 + H2O = a ganglioside GM3 + N-acetylneuraminate. It catalyses the reaction a ganglioside GM3 + H2O = a beta-D-galactosyl-(1-&gt;4)-beta-D-glucosyl-(1&lt;-&gt;1)-ceramide + N-acetylneuraminate. It carries out the reaction a ganglioside GM2 + H2O = a ganglioside GA2 + N-acetylneuraminate. The enzyme catalyses a neolactoside IV(3)-alpha-NeuAc-nLc4Cer(d18:1(4E)) + H2O = a neolactoside nLc4Cer(d18:1(4E)) + N-acetylneuraminate. The catalysed reaction is N-acetyl-alpha-neuraminosyl-(2-&gt;3)-beta-D-galactosyl-(1-&gt;4)-D-glucose + H2O = lactose + N-acetylneuraminate. In terms of biological role, exo-alpha-sialidase that catalyzes the hydrolytic cleavage of the terminal sialic acid (N-acetylneuraminic acid, Neu5Ac) of a glycan moiety in the catabolism of glycolipids, glycoproteins and oligosacharides. Recognizes sialyl linkage positions of the glycan moiety as well as the supramolecular organization of the sialoglycoconjugate. Displays preference for alpha-(2-&gt;3)-sialylated GD1a and GT1B gangliosides over alpha-(2-&gt;8)-sialylated GD1b, in both monomeric forms and micelles. Hydrolyzes exclusively monomeric GM1 ganglioside, but has no activity toward the miscellar form. Has lower sialidase activity for glycoproteins such as fetuin and TF/transferrin that carry a mixture of alpha-(2-&gt;3) and alpha-(2-&gt;6)-sialyl linkages. Cleaves milk oligosaccharide alpha-(2-&gt;3)-sialyllactose, but is inactive toward isomer alpha-(2-&gt;6)-sialyllactose isomer. Has no activity toward colominic acid, a homomer of alpha-(2-&gt;8)-linked Neu5Ac residues. In Mus musculus (Mouse), this protein is Sialidase-2 (Neu2).